Here is a 185-residue protein sequence, read N- to C-terminus: Ribosome maturation factor RimM (185 aa).

The PRC barrel domain maps to 106-185; the sequence is EGDYYWKDLM…SIEVDWDPGF (80 aa).

It belongs to the RimM family. In terms of assembly, binds ribosomal protein uS19.

The protein resides in the cytoplasm. Functionally, an accessory protein needed during the final step in the assembly of 30S ribosomal subunit, possibly for assembly of the head region. Essential for efficient processing of 16S rRNA. May be needed both before and after RbfA during the maturation of 16S rRNA. It has affinity for free ribosomal 30S subunits but not for 70S ribosomes. The polypeptide is Ribosome maturation factor RimM (Shigella dysenteriae serotype 1 (strain Sd197)).